We begin with the raw amino-acid sequence, 166 residues long: Small ribosomal subunit protein uS5 (166 aa).

An S5 DRBM domain is found at 11–74 (LQEKLVQVNR…EAARKNMVDV (64 aa)).

The protein belongs to the universal ribosomal protein uS5 family. In terms of assembly, part of the 30S ribosomal subunit. Contacts proteins S4 and S8.

With S4 and S12 plays an important role in translational accuracy. In terms of biological role, located at the back of the 30S subunit body where it stabilizes the conformation of the head with respect to the body. This chain is Small ribosomal subunit protein uS5, found in Marinobacter nauticus (strain ATCC 700491 / DSM 11845 / VT8) (Marinobacter aquaeolei).